A 345-amino-acid chain; its full sequence is GDP-mannose transporter (345 aa).

Residues 1–8 (MDNHMLNR) are Cytoplasmic-facing. Residues 9–29 (ISKSPILPVVSYCMASILMTL) traverse the membrane as a helical segment. The Lumenal segment spans residues 30-40 (TNKYVLSSPGY). Residues 41 to 61 (NMNFLLLTVQSTVCVAAIGIL) traverse the membrane as a helical segment. At 62–78 (KRLKVINYRDFDFREAK) the chain is on the cytoplasmic side. The helical transmembrane segment at 79–101 (FWFPISFLLVAMIYTASKALQFL) threads the bilayer. Residues 102–104 (SVP) lie on the Lumenal side of the membrane. A helical membrane pass occupies residues 105 to 127 (VYTIFKNLTIIIIAYGEVLWFGG). Residues 128 to 131 (HVTA) are Cytoplasmic-facing. Residues 132–150 (LTLFSFGLMVLSSIVAAWA) form a helical membrane-spanning segment. The Lumenal portion of the chain corresponds to 151 to 161 (DIQSSSFASQT). The chain crosses the membrane as a helical span at residues 162-182 (LNSGYLWMVLNCLTNAAFVLA). The Cytoplasmic segment spans residues 183 to 194 (MRKRIKLTNFRD). A helical membrane pass occupies residues 195 to 215 (FDTMFYNNLLSIPVLVICTLF). Over 216-233 (TEDWSAENIAQNFPPDAK) the chain is Lumenal. The helical transmembrane segment at 234–254 (FGVLMAMAISGVSSVGISYTS) threads the bilayer. Over 255–264 (AWCVRVTSST) the chain is Cytoplasmic. A helical transmembrane segment spans residues 265–285 (TYSMVGALNKLPLAIAGLVFF). Over 286-288 (DAP) the chain is Lumenal. Residues 289-309 (ITFGSVTAILLGFISGVVYAV) form a helical membrane-spanning segment. The Cytoplasmic segment spans residues 310–345 (AKSQQQRQKDPATILPMTHNPVSASSQSMRDSLSKS). Positions 319–345 (DPATILPMTHNPVSASSQSMRDSLSKS) are disordered. Residues 329 to 345 (NPVSASSQSMRDSLSKS) are compositionally biased toward polar residues.

This sequence belongs to the TPT transporter family. SLC35D subfamily. In terms of assembly, homooligomer.

It localises to the golgi apparatus membrane. The protein resides in the cytoplasmic vesicle membrane. The protein localises to the endoplasmic reticulum membrane. In terms of biological role, involved in the import of GDP-mannose from the cytoplasm into the Golgi lumen. This chain is GDP-mannose transporter (vrg4), found in Schizosaccharomyces pombe (strain 972 / ATCC 24843) (Fission yeast).